The following is a 213-amino-acid chain: 3-hexulose-6-phosphate synthase 2 (213 aa).

The protein belongs to the HPS/KGPDC family. HPS subfamily.

It carries out the reaction D-ribulose 5-phosphate + formaldehyde = D-arabino-hex-3-ulose 6-phosphate. The protein operates within one-carbon metabolism; formaldehyde assimilation via RuMP pathway; D-fructose 6-phosphate from D-ribulose 5-phosphate and formaldehyde: step 1/2. Catalyzes the condensation of ribulose 5-phosphate with formaldehyde to form 3-hexulose 6-phosphate. The chain is 3-hexulose-6-phosphate synthase 2 from Staphylococcus saprophyticus subsp. saprophyticus (strain ATCC 15305 / DSM 20229 / NCIMB 8711 / NCTC 7292 / S-41).